The chain runs to 229 residues: Putative N-acetylmannosamine-6-phosphate 2-epimerase 2 (229 aa).

This sequence belongs to the NanE family.

It catalyses the reaction an N-acyl-D-glucosamine 6-phosphate = an N-acyl-D-mannosamine 6-phosphate. Its pathway is amino-sugar metabolism; N-acetylneuraminate degradation; D-fructose 6-phosphate from N-acetylneuraminate: step 3/5. Converts N-acetylmannosamine-6-phosphate (ManNAc-6-P) to N-acetylglucosamine-6-phosphate (GlcNAc-6-P). The sequence is that of Putative N-acetylmannosamine-6-phosphate 2-epimerase 2 from Salmonella paratyphi A (strain ATCC 9150 / SARB42).